Here is a 322-residue protein sequence, read N- to C-terminus: Beta-carotene 3-hydroxylase, chloroplastic (322 aa).

Residues threonine 1–arginine 68 constitute a chloroplast transit peptide. 2 consecutive transmembrane segments (helical) span residues glutamine 118 to leucine 138 and alanine 149 to methionine 169. A Fatty acid hydroxylase domain is found at glycine 164–tyrosine 286. The Histidine box-1 signature appears at histidine 177 to histidine 182. The Histidine box-2 motif lies at histidine 191–histidine 195. 2 consecutive transmembrane segments (helical) span residues leucine 207–proline 227 and glycine 231–valine 251. Positions histidine 252–histidine 257 match the Histidine box-3 motif. The short motif at histidine 278–histidine 282 is the Histidine box-4 element.

The protein belongs to the sterol desaturase family.

It is found in the plastid. Its subcellular location is the chloroplast membrane. The enzyme catalyses all-trans-beta-carotene + 4 reduced [2Fe-2S]-[ferredoxin] + 2 O2 + 4 H(+) = all-trans-zeaxanthin + 4 oxidized [2Fe-2S]-[ferredoxin] + 2 H2O. Functionally, nonheme diiron monooxygenase involved in the biosynthesis of astaxanthin. Hydroxylates beta-ring of beta-carotene and catalyzes the conversion of canthaxanthin to astaxanthin. Uses ferredoxin as an electron donor. This chain is Beta-carotene 3-hydroxylase, chloroplastic (CRTZ), found in Haematococcus lacustris (Green alga).